A 202-amino-acid polypeptide reads, in one-letter code: Imidazoleglycerol-phosphate dehydratase (202 aa).

This sequence belongs to the imidazoleglycerol-phosphate dehydratase family.

It is found in the cytoplasm. It carries out the reaction D-erythro-1-(imidazol-4-yl)glycerol 3-phosphate = 3-(imidazol-4-yl)-2-oxopropyl phosphate + H2O. It functions in the pathway amino-acid biosynthesis; L-histidine biosynthesis; L-histidine from 5-phospho-alpha-D-ribose 1-diphosphate: step 6/9. This Acinetobacter baylyi (strain ATCC 33305 / BD413 / ADP1) protein is Imidazoleglycerol-phosphate dehydratase.